A 253-amino-acid chain; its full sequence is Imidazole glycerol phosphate synthase subunit HisF (253 aa).

Active-site residues include Asp-11 and Asp-130.

Belongs to the HisA/HisF family. In terms of assembly, heterodimer of HisH and HisF.

The protein localises to the cytoplasm. The enzyme catalyses 5-[(5-phospho-1-deoxy-D-ribulos-1-ylimino)methylamino]-1-(5-phospho-beta-D-ribosyl)imidazole-4-carboxamide + L-glutamine = D-erythro-1-(imidazol-4-yl)glycerol 3-phosphate + 5-amino-1-(5-phospho-beta-D-ribosyl)imidazole-4-carboxamide + L-glutamate + H(+). It functions in the pathway amino-acid biosynthesis; L-histidine biosynthesis; L-histidine from 5-phospho-alpha-D-ribose 1-diphosphate: step 5/9. Functionally, IGPS catalyzes the conversion of PRFAR and glutamine to IGP, AICAR and glutamate. The HisF subunit catalyzes the cyclization activity that produces IGP and AICAR from PRFAR using the ammonia provided by the HisH subunit. This Paracoccus denitrificans (strain Pd 1222) protein is Imidazole glycerol phosphate synthase subunit HisF.